Here is a 212-residue protein sequence, read N- to C-terminus: Adenylate kinase (212 aa).

10–15 (GSGKGT) contacts ATP. Residues 30–59 (STGDLMRKEINDETPLGIECARYMNEGRLV) are NMP. AMP contacts are provided by residues T31, R36, 57–59 (RLV), and Q90. The interval 124–161 (GRLICPKCKVSYHIISRKPKLEGICDNDGTELVRRPDD) is LID. An ATP-binding site is contributed by R125. C128 and C131 together coordinate Zn(2+). 134-135 (SY) contacts ATP. The Zn(2+) site is built by C148 and D151. The AMP site is built by R158 and R169. N198 is a binding site for ATP.

Belongs to the adenylate kinase family. In terms of assembly, monomer.

It is found in the cytoplasm. The catalysed reaction is AMP + ATP = 2 ADP. Its pathway is purine metabolism; AMP biosynthesis via salvage pathway; AMP from ADP: step 1/1. Functionally, catalyzes the reversible transfer of the terminal phosphate group between ATP and AMP. Plays an important role in cellular energy homeostasis and in adenine nucleotide metabolism. The chain is Adenylate kinase from Mesoplasma florum (strain ATCC 33453 / NBRC 100688 / NCTC 11704 / L1) (Acholeplasma florum).